A 415-amino-acid polypeptide reads, in one-letter code: Gamma-glutamyl phosphate reductase (415 aa).

This sequence belongs to the gamma-glutamyl phosphate reductase family.

Its subcellular location is the cytoplasm. The enzyme catalyses L-glutamate 5-semialdehyde + phosphate + NADP(+) = L-glutamyl 5-phosphate + NADPH + H(+). Its pathway is amino-acid biosynthesis; L-proline biosynthesis; L-glutamate 5-semialdehyde from L-glutamate: step 2/2. Its function is as follows. Catalyzes the NADPH-dependent reduction of L-glutamate 5-phosphate into L-glutamate 5-semialdehyde and phosphate. The product spontaneously undergoes cyclization to form 1-pyrroline-5-carboxylate. The protein is Gamma-glutamyl phosphate reductase of Clostridium perfringens (strain ATCC 13124 / DSM 756 / JCM 1290 / NCIMB 6125 / NCTC 8237 / Type A).